Reading from the N-terminus, the 1132-residue chain is Sentrin-specific protease 6 (1132 aa).

2 disordered regions span residues 23 to 51 (SKRDGGFKNNWSFDHEEESEGDADKDGAN) and 327 to 388 (LPGG…VPST). Serine 41, serine 355, serine 356, serine 371, and serine 373 each carry phosphoserine. At threonine 436 the chain carries Phosphothreonine. A Glycyl lysine isopeptide (Lys-Gly) (interchain with G-Cter in SUMO2) cross-link involves residue lysine 648. Residues 686 to 1132 (ISVTNEDLHC…QYASASGGSE (447 aa)) are protease. Residues histidine 785 and aspartate 936 contribute to the active site. Serine 938 is subject to Phosphoserine. The active site involves cysteine 1049. Serine 1131 bears the Phosphoserine mark.

The protein belongs to the peptidase C48 family. Interacts with RXRA. Forms a complex with KAT5-TIP60 and UBE2I in response to UV irradiation. Interacts with RPA1 to maintain it in hyposumoylated state during S phase preventing DNA repair initiation.

It localises to the nucleus. Its pathway is protein modification; protein sumoylation. In terms of biological role, protease that deconjugates SUMO1, SUMO2 and SUMO3 from targeted proteins. Processes preferentially poly-SUMO2 and poly-SUMO3 chains, but does not efficiently process SUMO1, SUMO2 and SUMO3 precursors. Deconjugates SUMO1 from RXRA, leading to transcriptional activation. Involved in chromosome alignment and spindle assembly, by regulating the kinetochore CENPH-CENPI-CENPK complex. Desumoylates PML and CENPI, protecting them from degradation by the ubiquitin ligase RNF4, which targets polysumoylated proteins for proteasomal degradation. Also desumoylates RPA1, thus preventing recruitment of RAD51 to the DNA damage foci to initiate DNA repair through homologous recombination. This is Sentrin-specific protease 6 (Senp6) from Mus musculus (Mouse).